The following is a 304-amino-acid chain: N-acetyl-D-glucosamine kinase (304 aa).

Residues 4–11 (GLDIGGTK) and 133–140 (GFGGGFVL) each bind ATP. The Zn(2+) site is built by histidine 157, cysteine 178, cysteine 180, and cysteine 185.

It belongs to the ROK (NagC/XylR) family. NagK subfamily.

It catalyses the reaction N-acetyl-D-glucosamine + ATP = N-acetyl-D-glucosamine 6-phosphate + ADP + H(+). The protein operates within cell wall biogenesis; peptidoglycan recycling. In terms of biological role, catalyzes the phosphorylation of N-acetyl-D-glucosamine (GlcNAc) derived from cell-wall degradation, yielding GlcNAc-6-P. The polypeptide is N-acetyl-D-glucosamine kinase (Haemophilus influenzae (strain 86-028NP)).